A 641-amino-acid polypeptide reads, in one-letter code: Chaperone protein DnaK (641 aa).

Residue threonine 200 is modified to Phosphothreonine; by autocatalysis. Positions 606–623 are enriched in low complexity; sequence AEQGGNADAASGNAQASK. A disordered region spans residues 606 to 627; the sequence is AEQGGNADAASGNAQASKAADD.

The protein belongs to the heat shock protein 70 family.

Its function is as follows. Acts as a chaperone. The protein is Chaperone protein DnaK of Xanthomonas euvesicatoria pv. vesicatoria (strain 85-10) (Xanthomonas campestris pv. vesicatoria).